Consider the following 258-residue polypeptide: Redox-sensing transcriptional repressor Rex (258 aa).

Residues 26 to 65 (LYLRALTALSERSVPTVSSEELAAAAGVNSAKLRKDFSYL) constitute a DNA-binding region (H-T-H motif). Residue 100–105 (GIGNLG) participates in NAD(+) binding. The disordered stretch occupies residues 219–258 (AGEEAAADGAAPPVAARKQQRSTGSADQGPDGDVPAVMPA). A compositionally biased stretch (low complexity) spans 225–234 (ADGAAPPVAA).

The protein belongs to the transcriptional regulatory Rex family. As to quaternary structure, homodimer.

It is found in the cytoplasm. Functionally, modulates transcription of respiratory genes in response to changes in cellular NADH/NAD(+) redox state. Binds to the DNA sequence motif 5'-TGTGAACGCGTTCACA-3' in the promoter of the cydABCD operon. May play a general role as a sensor of cellular redox balance. In Streptomyces coelicolor (strain ATCC BAA-471 / A3(2) / M145), this protein is Redox-sensing transcriptional repressor Rex.